A 154-amino-acid chain; its full sequence is PTS system fructose-specific EIIA component (154 aa).

The PTS EIIA type-2 domain maps to 8 to 152 (TITPLELISL…QTVQDVLAEV (145 aa)). Histidine 70 (tele-phosphohistidine intermediate) is an active-site residue. Histidine 70 carries the post-translational modification Phosphohistidine; by HPr.

Its subcellular location is the cytoplasm. Functionally, the phosphoenolpyruvate-dependent sugar phosphotransferase system (sugar PTS), a major carbohydrate active transport system, catalyzes the phosphorylation of incoming sugar substrates concomitantly with their translocation across the cell membrane. The enzyme II PtfABC PTS system is involved in fructose transport. The protein is PTS system fructose-specific EIIA component of Haloferax volcanii (strain ATCC 29605 / DSM 3757 / JCM 8879 / NBRC 14742 / NCIMB 2012 / VKM B-1768 / DS2) (Halobacterium volcanii).